The sequence spans 214 residues: Single-pass membrane and coiled-coil domain-containing protein 1 (214 aa).

The stretch at 6–42 (TTLISLKEAMKRVDHKLQALETQFKELDFTKDNLMQK) forms a coiled coil. A helical transmembrane segment spans residues 65–81 (ALQLTSMELNILYSYVI).

Its subcellular location is the membrane. The polypeptide is Single-pass membrane and coiled-coil domain-containing protein 1 (SMCO1) (Homo sapiens (Human)).